Here is a 262-residue protein sequence, read N- to C-terminus: Zinc-finger homeodomain protein 6 (262 aa).

2 stretches are compositionally biased toward basic and acidic residues: residues 1–25 (MEVR…DHHR) and 36–47 (NKEKPTTKRNGS). The segment at 1–93 (MEVREKKDEK…ECQKNHAASS (93 aa)) is disordered. Residues 82 to 131 (YRECQKNHAASSGGHVVDGCGEFMSSGEEGTVESLLCAACDCHRSFHRKE) form a ZF-HD dimerization-type; degenerate zinc finger. A DNA-binding region (homeobox) is located at residues 198–261 (KKRFRTKFNE…NNKQAAKKKD (64 aa)).

As to quaternary structure, homo- and heterodimer with other ZFHD proteins. Interacts with MIF1 and MIF3; these interactions prevent nuclear localization and DNA-binding to inhibit transcription regulation activity. Binds to ZHD1, ZHD2, ZHD10 and ZHD11. In terms of tissue distribution, expressed in seedlings, roots, leaves, stems, flowers and inflorescence.

Its subcellular location is the nucleus. Putative transcription factor. The chain is Zinc-finger homeodomain protein 6 (ZHD6) from Arabidopsis thaliana (Mouse-ear cress).